The primary structure comprises 326 residues: Aspartate carbamoyltransferase catalytic subunit (326 aa).

Residues Arg-58 and Thr-59 each contribute to the carbamoyl phosphate site. An L-aspartate-binding site is contributed by Lys-86. Carbamoyl phosphate is bound by residues Arg-108, His-141, and Gln-144. Residues Arg-181 and Arg-239 each contribute to the L-aspartate site. The carbamoyl phosphate site is built by Gly-280 and Pro-281.

Belongs to the aspartate/ornithine carbamoyltransferase superfamily. ATCase family. In terms of assembly, heterododecamer (2C3:3R2) of six catalytic PyrB chains organized as two trimers (C3), and six regulatory PyrI chains organized as three dimers (R2).

It catalyses the reaction carbamoyl phosphate + L-aspartate = N-carbamoyl-L-aspartate + phosphate + H(+). The protein operates within pyrimidine metabolism; UMP biosynthesis via de novo pathway; (S)-dihydroorotate from bicarbonate: step 2/3. In terms of biological role, catalyzes the condensation of carbamoyl phosphate and aspartate to form carbamoyl aspartate and inorganic phosphate, the committed step in the de novo pyrimidine nucleotide biosynthesis pathway. This Synechococcus sp. (strain JA-3-3Ab) (Cyanobacteria bacterium Yellowstone A-Prime) protein is Aspartate carbamoyltransferase catalytic subunit.